A 368-amino-acid polypeptide reads, in one-letter code: Endoglucanase (368 aa).

Positions 1-21 (MNVLRSGIVTMLLLAAFSVQA) are cleaved as a signal peptide. Glu55 functions as the Proton donor in the catalytic mechanism. Asp116 functions as the Nucleophile in the catalytic mechanism.

This sequence belongs to the glycosyl hydrolase 8 (cellulase D) family.

It localises to the secreted. It carries out the reaction Endohydrolysis of (1-&gt;4)-beta-D-glucosidic linkages in cellulose, lichenin and cereal beta-D-glucans.. It participates in glycan metabolism; bacterial cellulose biosynthesis. In terms of biological role, hydrolyzes carboxymethylcellulose. The chain is Endoglucanase (bcsZ) from Escherichia coli (strain K12).